Here is a 1168-residue protein sequence, read N- to C-terminus: Carboxylic acid reductase (1168 aa).

Residues His-290, Ser-385, 407 to 408 (EG), Thr-412, Asp-485, 497 to 500 (YLDR), Lys-506, and Lys-606 each bind AMP. In terms of domain architecture, Carrier spans 645–720 (APVLPTLCRA…ALADHIEAAR (76 aa)). Position 679 is an O-(pantetheine 4'-phosphoryl)serine (Ser-679). NADP(+)-binding positions include 777–780 (TGFL), Arg-804, Arg-814, 844–845 (DK), 870–872 (PAA), Ser-910, Tyr-946, and Lys-950.

Belongs to the ATP-dependent AMP-binding enzyme family. Carboxylic acid reductase subfamily. Requires pantetheine 4'-phosphate as cofactor.

The catalysed reaction is a carboxylate + ATP + NADPH + H(+) = an aldehyde + AMP + diphosphate + NADP(+). It carries out the reaction a medium-chain fatty acid + ATP + H(+) = a medium-chain fatty acyl-AMP + diphosphate. It catalyses the reaction a long-chain fatty acid + ATP + H(+) = a long-chain fatty acyl-AMP + diphosphate. The enzyme catalyses dodecanoate + ATP + H(+) = dodecanoyl-AMP + diphosphate. The catalysed reaction is hexadecanoate + ATP + H(+) = hexadecanoyl-AMP + diphosphate. Functionally, catalyzes the ATP- and NADPH-dependent reduction of carboxylic acids to the corresponding aldehydes. In vitro, also catalyzes the activation of medium/long-chain fatty acids as acyl-adenylates (acyl-AMP). The protein is Carboxylic acid reductase of Mycobacterium tuberculosis (strain ATCC 25618 / H37Rv).